The sequence spans 397 residues: 4-hydroxybenzoate polyprenyltransferase, mitochondrial (397 aa).

A mitochondrion-targeting transit peptide spans 1 to 14 (MFAVRHLLKSRKHF). A run of 9 helical transmembrane segments spans residues 96–116 (IGTY…ADAG), 121–141 (LTML…GCTI), 169–189 (FDAI…LVQL), 190–210 (NWQS…YPLM), 213–233 (VTYW…LLGW), 242–262 (LAAC…YDTI), 289–309 (VWLS…GWAC), 313–333 (LPYY…IYSL), and 345–365 (FLSN…GTLL).

It belongs to the UbiA prenyltransferase family. The cofactor is Mg(2+).

The protein resides in the mitochondrion inner membrane. It carries out the reaction an all-trans-polyprenyl diphosphate + 4-hydroxybenzoate = a 4-hydroxy-3-(all-trans-polyprenyl)benzoate + diphosphate. The protein operates within cofactor biosynthesis; ubiquinone biosynthesis. Functionally, catalyzes the prenylation of para-hydroxybenzoate (PHB) with an all-trans polyprenyl group. Mediates the second step in the final reaction sequence of coenzyme Q (CoQ) biosynthesis, which is the condensation of the polyisoprenoid side chain with PHB, generating the first membrane-bound Q intermediate. The sequence is that of 4-hydroxybenzoate polyprenyltransferase, mitochondrial from Drosophila pseudoobscura pseudoobscura (Fruit fly).